The sequence spans 208 residues: MDDVTKALNLVPMVVEQTSRGERAYDIYSRLLKERLIFLVGPIDDYMANLIVAQLLFLEAENPEKDINIYINSPGGVVTAGMAIYDTMQYIKPAVSTICVGQAASMGALLLASGASGKRYALPNSRVMIHQPLGGFQGQATDVDIHAREILALRARLNEILAKHTGQSLETIAHDTERDNFKSAVDAQAYGLVDQVFGQRQEELIQSS.

Catalysis depends on Ser105, which acts as the Nucleophile. The active site involves His130.

The protein belongs to the peptidase S14 family. As to quaternary structure, fourteen ClpP subunits assemble into 2 heptameric rings which stack back to back to give a disk-like structure with a central cavity, resembling the structure of eukaryotic proteasomes.

The protein localises to the cytoplasm. The enzyme catalyses Hydrolysis of proteins to small peptides in the presence of ATP and magnesium. alpha-casein is the usual test substrate. In the absence of ATP, only oligopeptides shorter than five residues are hydrolyzed (such as succinyl-Leu-Tyr-|-NHMec, and Leu-Tyr-Leu-|-Tyr-Trp, in which cleavage of the -Tyr-|-Leu- and -Tyr-|-Trp bonds also occurs).. Functionally, cleaves peptides in various proteins in a process that requires ATP hydrolysis. Has a chymotrypsin-like activity. Plays a major role in the degradation of misfolded proteins. This Xylella fastidiosa (strain M12) protein is ATP-dependent Clp protease proteolytic subunit.